Reading from the N-terminus, the 89-residue chain is Large ribosomal subunit protein uL23c (89 aa).

This sequence belongs to the universal ribosomal protein uL23 family. Part of the 50S ribosomal subunit.

The protein resides in the plastid. It localises to the chloroplast. Its function is as follows. Binds to 23S rRNA. The protein is Large ribosomal subunit protein uL23c (rpl23) of Staurastrum punctulatum (Green alga).